A 105-amino-acid chain; its full sequence is MICOS complex subunit Mic10 (105 aa).

A helical membrane pass occupies residues 29–46 (LLKVTGGVAIGIVASVAF). The Mitochondrial intermembrane portion of the chain corresponds to 47–105 (FKSRSWPIWFGSGVGLGTGWSNCRHDFASPYVLHGKRVPAGQDSQGKPAYNIITEQHKQ). The interval 85–105 (PAGQDSQGKPAYNIITEQHKQ) is disordered.

Belongs to the MICOS complex subunit Mic10 family. As to quaternary structure, component of the mitochondrial contact site and cristae organizing system (MICOS) complex.

It is found in the mitochondrion inner membrane. Functionally, component of the MICOS complex, a large protein complex of the mitochondrial inner membrane that plays crucial roles in the maintenance of crista junctions, inner membrane architecture, and formation of contact sites to the outer membrane. This is MICOS complex subunit Mic10 from Caenorhabditis elegans.